Consider the following 156-residue polypeptide: Small ribosomal subunit protein uS7 (156 aa).

It belongs to the universal ribosomal protein uS7 family. Part of the 30S ribosomal subunit. Contacts proteins S9 and S11.

One of the primary rRNA binding proteins, it binds directly to 16S rRNA where it nucleates assembly of the head domain of the 30S subunit. Is located at the subunit interface close to the decoding center, probably blocks exit of the E-site tRNA. The polypeptide is Small ribosomal subunit protein uS7 (Pelotomaculum thermopropionicum (strain DSM 13744 / JCM 10971 / SI)).